Here is a 636-residue protein sequence, read N- to C-terminus: Protein SOSEKI 2 (636 aa).

A DIX-like oligomerization domain region spans residues 9–103 (HKIEVIYLLS…YVLKALEVMD (95 aa)). Disordered regions lie at residues 164 to 188 (VHNN…SRVP), 281 to 304 (HGRL…TVDI), 340 to 393 (VEGS…TSAK), and 499 to 524 (LGSG…VSRP). Polar residues-rich tracts occupy residues 375-390 (SSKS…TYET) and 499-510 (LGSGQASESFSP).

It belongs to the SOSEKI family. Homodimer. Forms long polymer filaments with other SOKs proteins polymers crucial for polar localization and biological activity.

The protein localises to the cell membrane. In terms of biological role, SOSEKI proteins locally interpret global polarity cues and can influence cell division orientation to coordinate cell polarization relative to body axes. The sequence is that of Protein SOSEKI 2 from Physcomitrium patens (Spreading-leaved earth moss).